The chain runs to 969 residues: Alpha-glucosidase (969 aa).

The signal sequence occupies residues M1–G24. 14 N-linked (GlcNAc...) asparagine glycosylation sites follow: N37, N67, N99, N116, N139, N146, N209, N245, N249, N331, N406, N429, N462, and N470. D481 serves as the catalytic Nucleophile. E484 is a catalytic residue. Residues N520, N523, and N589 are each glycosylated (N-linked (GlcNAc...) asparagine). D647 acts as the Proton donor in catalysis. Residues N648, N801, N810, N821, N885, N915, N934, N942, N954, and N966 are each glycosylated (N-linked (GlcNAc...) asparagine).

The protein belongs to the glycosyl hydrolase 31 family.

It is found in the secreted. The catalysed reaction is Hydrolysis of terminal, non-reducing (1-&gt;4)-linked alpha-D-glucose residues with release of alpha-D-glucose.. Its function is as follows. Hydrolyzes malto-oligosaccharides, but has a low activity toward soluble starch. The chain is Alpha-glucosidase (agl1) from Schizosaccharomyces pombe (strain 972 / ATCC 24843) (Fission yeast).